Reading from the N-terminus, the 359-residue chain is Squamosa promoter-binding-like protein 13A (359 aa).

Residues 75-94 (AKPEGSRSSSSKRTRGNGVG) are disordered. The SBP-type zinc-finger motif lies at 98–175 (MPICLVDGCD…DGHNRRRRKP (78 aa)). Cys101, Cys106, Cys123, His126, Cys142, Cys145, His149, and Cys161 together coordinate Zn(2+). Residues 158-174 (KRSCRKRLDGHNRRRRK) carry the Bipartite nuclear localization signal motif.

Requires Zn(2+) as cofactor.

It localises to the nucleus. Its function is as follows. Trans-acting factor that binds specifically to the consensus nucleotide sequence 5'-TNCGTACAA-3'. In Arabidopsis thaliana (Mouse-ear cress), this protein is Squamosa promoter-binding-like protein 13A (SPL13A).